We begin with the raw amino-acid sequence, 235 residues long: Uridylate kinase (235 aa).

9–12 (KLSG) contacts ATP. UMP is bound at residue G51. Residues G52 and R56 each contribute to the ATP site. Residues D71 and 132 to 139 (TGNPYFTT) each bind UMP. ATP contacts are provided by T159, Y165, and D168.

Belongs to the UMP kinase family. As to quaternary structure, homohexamer.

The protein resides in the cytoplasm. It carries out the reaction UMP + ATP = UDP + ADP. Its pathway is pyrimidine metabolism; CTP biosynthesis via de novo pathway; UDP from UMP (UMPK route): step 1/1. Its activity is regulated as follows. Inhibited by UTP. In terms of biological role, catalyzes the reversible phosphorylation of UMP to UDP. This chain is Uridylate kinase, found in Flavobacterium psychrophilum (strain ATCC 49511 / DSM 21280 / CIP 103535 / JIP02/86).